A 537-amino-acid chain; its full sequence is Di/tripeptide-binding protein 1 (537 aa).

The N-terminal stretch at 1 to 29 is a signal peptide; sequence MRRNAVIRSAIMPSLLGAALVAAVPQAFA.

Belongs to the bacterial solute-binding protein 5 family. The complex is composed of two ATP-binding proteins (DppD and DppF), two transmembrane proteins (DppB and DppC) and a solute-binding protein (DppA1). Five orthologous SBPs (DppA1-A5) are present in P.aeruginosa, which increases the substrate specificity of the DppBCDF transporter.

Functionally, part of the ABC transporter DppABCDF involved in the uptake of various di/tripeptides. Prefers dipeptides with acidic residues at the C-terminal end. Involved in the uptake of phaseolotoxin, a toxic tripeptide inhibiting the enzyme ornithine carbamoyltransferase. The sequence is that of Di/tripeptide-binding protein 1 from Pseudomonas aeruginosa (strain UCBPP-PA14).